The chain runs to 613 residues: Leucine aminopeptidase 2 (613 aa).

A peptide-binding positions include 134-136 and 265-270; these read QAQ and PYGGME. His294 contacts Zn(2+). Glu295 functions as the Proton acceptor in the catalytic mechanism. His298 and Glu317 together coordinate Zn(2+). The active-site Proton donor is Tyr382.

It belongs to the peptidase M1 family. Zn(2+) serves as cofactor.

It is found in the cytoplasm. Its subcellular location is the nucleus. The enzyme catalyses an epoxide + H2O = an ethanediol. Functionally, aminopeptidase that preferentially cleaves di- and tripeptides. Also has low epoxide hydrolase activity (in vitro). Can hydrolyze the epoxide leukotriene LTA(4) but it forms preferentially 5,6-dihydroxy-7,9,11,14-eicosatetraenoic acid rather than the cytokine leukotriene B(4) as the product compared to the homologous mammalian enzyme (in vitro). This Pyricularia oryzae (strain 70-15 / ATCC MYA-4617 / FGSC 8958) (Rice blast fungus) protein is Leucine aminopeptidase 2.